Consider the following 373-residue polypeptide: NAD(P)H-quinone oxidoreductase subunit 1 (373 aa).

Helical transmembrane passes span 28–48, 98–118, 129–149, 167–187, 205–225, 267–287, 309–329, and 348–368; these read LLWL…GVLV, LLFT…WLII, VGVG…GLLM, AAQS…IVMM, ILSW…ICAL, VLSA…PIPV, SVGI…AILL, and FLLP…LAFP.

This sequence belongs to the complex I subunit 1 family. In terms of assembly, NDH-1 is composed of at least 11 different subunits.

The protein localises to the cellular thylakoid membrane. The enzyme catalyses a plastoquinone + NADH + (n+1) H(+)(in) = a plastoquinol + NAD(+) + n H(+)(out). It carries out the reaction a plastoquinone + NADPH + (n+1) H(+)(in) = a plastoquinol + NADP(+) + n H(+)(out). NDH-1 shuttles electrons from an unknown electron donor, via FMN and iron-sulfur (Fe-S) centers, to quinones in the respiratory and/or the photosynthetic chain. The immediate electron acceptor for the enzyme in this species is believed to be plastoquinone. Couples the redox reaction to proton translocation, and thus conserves the redox energy in a proton gradient. The chain is NAD(P)H-quinone oxidoreductase subunit 1 from Parasynechococcus marenigrum (strain WH8102).